The primary structure comprises 123 residues: Large ribosomal subunit protein bL12 (123 aa).

This sequence belongs to the bacterial ribosomal protein bL12 family. As to quaternary structure, homodimer. Part of the ribosomal stalk of the 50S ribosomal subunit. Forms a multimeric L10(L12)X complex, where L10 forms an elongated spine to which 2 to 4 L12 dimers bind in a sequential fashion. Binds GTP-bound translation factors.

Forms part of the ribosomal stalk which helps the ribosome interact with GTP-bound translation factors. Is thus essential for accurate translation. In Bartonella tribocorum (strain CIP 105476 / IBS 506), this protein is Large ribosomal subunit protein bL12.